A 427-amino-acid chain; its full sequence is Tol-Pal system protein TolB (427 aa).

A signal peptide spans 1–23; it reads MKLLKRLVSVFAIVLAVGSNAFA.

This sequence belongs to the TolB family. The Tol-Pal system is composed of five core proteins: the inner membrane proteins TolA, TolQ and TolR, the periplasmic protein TolB and the outer membrane protein Pal. They form a network linking the inner and outer membranes and the peptidoglycan layer.

It localises to the periplasm. In terms of biological role, part of the Tol-Pal system, which plays a role in outer membrane invagination during cell division and is important for maintaining outer membrane integrity. In Haemophilus influenzae (strain PittEE), this protein is Tol-Pal system protein TolB.